The chain runs to 422 residues: Tyrosine--tRNA ligase (422 aa).

Y36 contributes to the L-tyrosine binding site. The 'HIGH' region signature appears at 41 to 50 (PTAGSLHIGH). L-tyrosine is bound by residues Y174 and Q178. A 'KMSKS' region motif is present at residues 234 to 238 (KFGKT). Position 237 (K237) interacts with ATP. The S4 RNA-binding domain maps to 356-420 (TDLVTLLVES…GKKQYRLVTW (65 aa)).

This sequence belongs to the class-I aminoacyl-tRNA synthetase family. TyrS type 1 subfamily. As to quaternary structure, homodimer.

It localises to the cytoplasm. It catalyses the reaction tRNA(Tyr) + L-tyrosine + ATP = L-tyrosyl-tRNA(Tyr) + AMP + diphosphate + H(+). In terms of biological role, catalyzes the attachment of tyrosine to tRNA(Tyr) in a two-step reaction: tyrosine is first activated by ATP to form Tyr-AMP and then transferred to the acceptor end of tRNA(Tyr). This chain is Tyrosine--tRNA ligase, found in Aeromonas hydrophila subsp. hydrophila (strain ATCC 7966 / DSM 30187 / BCRC 13018 / CCUG 14551 / JCM 1027 / KCTC 2358 / NCIMB 9240 / NCTC 8049).